Reading from the N-terminus, the 831-residue chain is Molybdenum cofactor sulfurase (831 aa).

The residue at position 262 (lysine 262) is an N6-(pyridoxal phosphate)lysine. Residue cysteine 422 is part of the active site. Residues 651–823 (AWLSEFLGKP…LSIGSHVIPK (173 aa)) enclose the MOSC domain.

The protein belongs to the class-V pyridoxal-phosphate-dependent aminotransferase family. MOCOS subfamily. It depends on pyridoxal 5'-phosphate as a cofactor.

It catalyses the reaction Mo-molybdopterin + L-cysteine + AH2 = thio-Mo-molybdopterin + L-alanine + A + H2O. It functions in the pathway cofactor biosynthesis; molybdopterin biosynthesis. Its function is as follows. Sulfurates the molybdenum cofactor. Sulfation of molybdenum is essential for xanthine dehydrogenase (XDH) and aldehyde oxidase (ADO) enzymes in which molybdenum cofactor is liganded by 1 oxygen and 1 sulfur atom in active form. The sequence is that of Molybdenum cofactor sulfurase (mocos) from Danio rerio (Zebrafish).